Here is a 78-residue protein sequence, read N- to C-terminus: Large ribosomal subunit protein bL28 (78 aa).

Belongs to the bacterial ribosomal protein bL28 family.

In Parasynechococcus marenigrum (strain WH8102), this protein is Large ribosomal subunit protein bL28.